The sequence spans 121 residues: Large ribosomal subunit protein uL22c (121 aa).

The protein belongs to the universal ribosomal protein uL22 family. In terms of assembly, part of the 50S ribosomal subunit.

The protein resides in the plastid. The protein localises to the chloroplast. Functionally, this protein binds specifically to 23S rRNA. Its function is as follows. The globular domain of the protein is located near the polypeptide exit tunnel on the outside of the subunit, while an extended beta-hairpin is found that lines the wall of the exit tunnel in the center of the 70S ribosome. The polypeptide is Large ribosomal subunit protein uL22c (rpl22) (Guillardia theta (Cryptophyte)).